A 1102-amino-acid chain; its full sequence is ATP-dependent DNA helicase MPH1 (1102 aa).

Residues 19–55 are disordered; it reads ALDKPATSGLHSREQEQQRDISNATPHTSTDLELEDF. A compositionally biased stretch (polar residues) spans 38–49; that stretch reads DISNATPHTSTD. Residues 147–315 enclose the Helicase ATP-binding domain; it reads IVKNGLFNNT…DVIDNLGVSH (169 aa). Residue 160–167 participates in ATP binding; the sequence is LPTGLGKT. Positions 263-266 match the DEAH box motif; it reads DEAH. A Helicase C-terminal domain is found at 490-651; the sequence is NLLNYFMDAG…GSRFNFRHDL (162 aa). Disordered regions lie at residues 672-702, 720-743, 818-837, and 858-1102; these read PIENTQDTSLPEPKARSTRGKKASKKKFNMP, ASKTKAKPNKSPKKAESKETDEIS, SQGIETRHTKPHGDTDKSRY, and SGRK…SESG. Over residues 687 to 699 the composition is skewed to basic residues; it reads RSTRGKKASKKKF. The segment covering 822 to 837 has biased composition (basic and acidic residues); it reads ETRHTKPHGDTDKSRY. Residues 1003 to 1019 are compositionally biased toward low complexity; that stretch reads SSGAASKSGSTASTAAK. A compositionally biased stretch (acidic residues) spans 1069 to 1082; that stretch reads SDDDDDDNDDEDDV.

It belongs to the DEAD box helicase family. DEAH subfamily. FANCM sub-subfamily. As to quaternary structure, interacts with the MHF histone-fold complex to form the FANCM-MHF complex.

It localises to the nucleus. The catalysed reaction is ATP + H2O = ADP + phosphate + H(+). Functionally, ATP-dependent DNA helicase involved in DNA damage repair by homologous recombination and in genome maintenance. Capable of unwinding D-loops. Plays a role in limiting crossover recombinants during mitotic DNA double-strand break (DSB) repair. Component of a FANCM-MHF complex which promotes gene conversion at blocked replication forks, probably by reversal of the stalled fork. The chain is ATP-dependent DNA helicase MPH1 from Pyricularia oryzae (strain 70-15 / ATCC MYA-4617 / FGSC 8958) (Rice blast fungus).